We begin with the raw amino-acid sequence, 455 residues long: Tubulin alpha chain (455 aa).

GTP-binding residues include Q11, E77, S145, G149, T150, S184, N211, and N233. E77 is a Mg(2+) binding site. E259 is an active-site residue.

Belongs to the tubulin family. Dimer of alpha and beta chains. A typical microtubule is a hollow water-filled tube with an outer diameter of 25 nm and an inner diameter of 15 nM. Alpha-beta heterodimers associate head-to-tail to form protofilaments running lengthwise along the microtubule wall with the beta-tubulin subunit facing the microtubule plus end conferring a structural polarity. Microtubules usually have 13 protofilaments but different protofilament numbers can be found in some organisms and specialized cells. Requires Mg(2+) as cofactor.

It localises to the cytoplasm. The protein resides in the cytoskeleton. The enzyme catalyses GTP + H2O = GDP + phosphate + H(+). Its function is as follows. Tubulin is the major constituent of microtubules, a cylinder consisting of laterally associated linear protofilaments composed of alpha- and beta-tubulin heterodimers. Microtubules grow by the addition of GTP-tubulin dimers to the microtubule end, where a stabilizing cap forms. Below the cap, tubulin dimers are in GDP-bound state, owing to GTPase activity of alpha-tubulin. This Entamoeba histolytica (strain ATCC 30459 / HM-1:IMSS / ABRM) protein is Tubulin alpha chain.